Consider the following 294-residue polypeptide: Nucleotide-binding protein Tfu_2020 (294 aa).

18–25 (GMSGAGRS) contributes to the ATP binding site. 69 to 72 (DVRS) is a GTP binding site.

This sequence belongs to the RapZ-like family.

Its function is as follows. Displays ATPase and GTPase activities. In Thermobifida fusca (strain YX), this protein is Nucleotide-binding protein Tfu_2020.